Consider the following 722-residue polypeptide: Glycine--tRNA ligase beta subunit (722 aa).

It belongs to the class-II aminoacyl-tRNA synthetase family. As to quaternary structure, tetramer of two alpha and two beta subunits.

The protein localises to the cytoplasm. It carries out the reaction tRNA(Gly) + glycine + ATP = glycyl-tRNA(Gly) + AMP + diphosphate. This is Glycine--tRNA ligase beta subunit from Xylella fastidiosa (strain Temecula1 / ATCC 700964).